Consider the following 410-residue polypeptide: Probable inactive allantoicase (410 aa).

It belongs to the allantoicase family.

Its function is as follows. The function of this enzyme is unclear as allantoicase activity is not known to exist in mammals. This is Probable inactive allantoicase (ALLC) from Macaca fascicularis (Crab-eating macaque).